An 87-amino-acid chain; its full sequence is Exodeoxyribonuclease 7 small subunit (87 aa).

Belongs to the XseB family. In terms of assembly, heterooligomer composed of large and small subunits.

The protein localises to the cytoplasm. It carries out the reaction Exonucleolytic cleavage in either 5'- to 3'- or 3'- to 5'-direction to yield nucleoside 5'-phosphates.. Its function is as follows. Bidirectionally degrades single-stranded DNA into large acid-insoluble oligonucleotides, which are then degraded further into small acid-soluble oligonucleotides. This is Exodeoxyribonuclease 7 small subunit from Xanthomonas campestris pv. campestris (strain 8004).